Here is a 571-residue protein sequence, read N- to C-terminus: Proline--tRNA ligase (571 aa).

This sequence belongs to the class-II aminoacyl-tRNA synthetase family. ProS type 1 subfamily. In terms of assembly, homodimer.

The protein localises to the cytoplasm. It catalyses the reaction tRNA(Pro) + L-proline + ATP = L-prolyl-tRNA(Pro) + AMP + diphosphate. Catalyzes the attachment of proline to tRNA(Pro) in a two-step reaction: proline is first activated by ATP to form Pro-AMP and then transferred to the acceptor end of tRNA(Pro). As ProRS can inadvertently accommodate and process non-cognate amino acids such as alanine and cysteine, to avoid such errors it has two additional distinct editing activities against alanine. One activity is designated as 'pretransfer' editing and involves the tRNA(Pro)-independent hydrolysis of activated Ala-AMP. The other activity is designated 'posttransfer' editing and involves deacylation of mischarged Ala-tRNA(Pro). The misacylated Cys-tRNA(Pro) is not edited by ProRS. This Ligilactobacillus salivarius (strain UCC118) (Lactobacillus salivarius) protein is Proline--tRNA ligase.